The following is a 209-amino-acid chain: MNKQPSQLAGVYAVTQPRPDLQEAVAAVLRGGVGIVQYRDKSEDADRRREEAGALCRLCEEYGALFLVNDDVDLAAAVAAHGVHLGRDDGAVVAARQQLGDTAWIGVSCYDDLDRARRLVAEGADYVAFGSIFPSPTKPESGLAPMELLRSGREATGCPTVAIGGIDAGNIHEVAAAGADAAAVVSALFAAEDPEAAARQLVAQWQRSR.

4-amino-2-methyl-5-(diphosphooxymethyl)pyrimidine-binding positions include 37-41 and asparagine 69; that span reads QYRDK. Aspartate 70 and aspartate 89 together coordinate Mg(2+). Serine 108 contributes to the 4-amino-2-methyl-5-(diphosphooxymethyl)pyrimidine binding site. 2-[(2R,5Z)-2-carboxy-4-methylthiazol-5(2H)-ylidene]ethyl phosphate is bound at residue 135–137; that stretch reads SPT. A 4-amino-2-methyl-5-(diphosphooxymethyl)pyrimidine-binding site is contributed by lysine 138. 2-[(2R,5Z)-2-carboxy-4-methylthiazol-5(2H)-ylidene]ethyl phosphate-binding positions include glycine 165 and 185–186; that span reads VS.

This sequence belongs to the thiamine-phosphate synthase family. Mg(2+) serves as cofactor.

The catalysed reaction is 2-[(2R,5Z)-2-carboxy-4-methylthiazol-5(2H)-ylidene]ethyl phosphate + 4-amino-2-methyl-5-(diphosphooxymethyl)pyrimidine + 2 H(+) = thiamine phosphate + CO2 + diphosphate. It carries out the reaction 2-(2-carboxy-4-methylthiazol-5-yl)ethyl phosphate + 4-amino-2-methyl-5-(diphosphooxymethyl)pyrimidine + 2 H(+) = thiamine phosphate + CO2 + diphosphate. The enzyme catalyses 4-methyl-5-(2-phosphooxyethyl)-thiazole + 4-amino-2-methyl-5-(diphosphooxymethyl)pyrimidine + H(+) = thiamine phosphate + diphosphate. The protein operates within cofactor biosynthesis; thiamine diphosphate biosynthesis; thiamine phosphate from 4-amino-2-methyl-5-diphosphomethylpyrimidine and 4-methyl-5-(2-phosphoethyl)-thiazole: step 1/1. Condenses 4-methyl-5-(beta-hydroxyethyl)thiazole monophosphate (THZ-P) and 2-methyl-4-amino-5-hydroxymethyl pyrimidine pyrophosphate (HMP-PP) to form thiamine monophosphate (TMP). The sequence is that of Thiamine-phosphate synthase from Halorhodospira halophila (strain DSM 244 / SL1) (Ectothiorhodospira halophila (strain DSM 244 / SL1)).